The sequence spans 223 residues: Ribose-5-phosphate isomerase A (223 aa).

Substrate is bound by residues 28 to 31 (TGST), 81 to 84 (DGAD), and 94 to 97 (KGGG). Residue glutamate 103 is the Proton acceptor of the active site. Lysine 121 lines the substrate pocket.

Belongs to the ribose 5-phosphate isomerase family. As to quaternary structure, homodimer.

The enzyme catalyses aldehydo-D-ribose 5-phosphate = D-ribulose 5-phosphate. Its pathway is carbohydrate degradation; pentose phosphate pathway; D-ribose 5-phosphate from D-ribulose 5-phosphate (non-oxidative stage): step 1/1. Functionally, catalyzes the reversible conversion of ribose-5-phosphate to ribulose 5-phosphate. This is Ribose-5-phosphate isomerase A from Herminiimonas arsenicoxydans.